The primary structure comprises 129 residues: Ribosome-binding factor A (129 aa).

This sequence belongs to the RbfA family. As to quaternary structure, monomer. Binds 30S ribosomal subunits, but not 50S ribosomal subunits or 70S ribosomes.

It is found in the cytoplasm. Functionally, one of several proteins that assist in the late maturation steps of the functional core of the 30S ribosomal subunit. Associates with free 30S ribosomal subunits (but not with 30S subunits that are part of 70S ribosomes or polysomes). Required for efficient processing of 16S rRNA. May interact with the 5'-terminal helix region of 16S rRNA. The polypeptide is Ribosome-binding factor A (Pseudomonas aeruginosa (strain UCBPP-PA14)).